Reading from the N-terminus, the 323-residue chain is Aldo-keto reductase family 1 member C1 (323 aa).

NADP(+)-binding positions include 20 to 24 (GFGTY) and D50. Y24 contributes to the substrate binding site. The active-site Proton donor is the Y55. H117 is a substrate binding site. Residues 166–167 (SN), Q190, and 216–222 (YSALGSH) each bind NADP(+). Substrate is bound by residues H222 and W227. NADP(+) is bound at residue 270 to 280 (KSYNEQRIRQN).

Belongs to the aldo/keto reductase family. In terms of assembly, monomer. As to expression, expressed in all tissues tested including liver, prostate, testis, adrenal gland, brain, uterus, mammary gland and keratinocytes. Highest levels found in liver, mammary gland and brain.

The protein localises to the cytoplasm. It is found in the cytosol. The catalysed reaction is a 3alpha-hydroxysteroid + NADP(+) = a 3-oxosteroid + NADPH + H(+). The enzyme catalyses a 3alpha-hydroxysteroid + NAD(+) = a 3-oxosteroid + NADH + H(+). It carries out the reaction (17R,20S)-17,20-dihydroxypregn-4-en-3-one + NADP(+) = 17alpha-hydroxyprogesterone + NADPH + H(+). It catalyses the reaction (17R,20S)-17,20-dihydroxypregn-4-en-3-one + NAD(+) = 17alpha-hydroxyprogesterone + NADH + H(+). The catalysed reaction is (20S)-hydroxypregn-4-en-3-one + NADP(+) = progesterone + NADPH + H(+). The enzyme catalyses (20S)-hydroxypregn-4-en-3-one + NAD(+) = progesterone + NADH + H(+). It carries out the reaction (1R,2R)-1,2-dihydrobenzene-1,2-diol + NADP(+) = catechol + NADPH + H(+). It catalyses the reaction (S)-indan-1-ol + NAD(+) = indan-1-one + NADH + H(+). The catalysed reaction is (S)-indan-1-ol + NADP(+) = indan-1-one + NADPH + H(+). The enzyme catalyses 5alpha-androstane-3alpha,17beta-diol + NADP(+) = 17beta-hydroxy-5alpha-androstan-3-one + NADPH + H(+). It carries out the reaction 5alpha-androstane-3beta,17beta-diol + NADP(+) = 17beta-hydroxy-5alpha-androstan-3-one + NADPH + H(+). It catalyses the reaction 5alpha-androstane-3alpha,17beta-diol + NAD(+) = 17beta-hydroxy-5alpha-androstan-3-one + NADH + H(+). The catalysed reaction is 17beta-hydroxy-5alpha-androstan-3-one + NADP(+) = 5alpha-androstan-3,17-dione + NADPH + H(+). The enzyme catalyses androsterone + NADP(+) = 5alpha-androstan-3,17-dione + NADPH + H(+). It carries out the reaction androsterone + NADPH + H(+) = 5alpha-androstane-3alpha,17beta-diol + NADP(+). It catalyses the reaction 5alpha-androstane-3alpha,17beta-diol + NAD(+) = androsterone + NADH + H(+). The catalysed reaction is 17beta-estradiol + NADP(+) = estrone + NADPH + H(+). The enzyme catalyses 17beta-estradiol + NAD(+) = estrone + NADH + H(+). It carries out the reaction testosterone + NADP(+) = androst-4-ene-3,17-dione + NADPH + H(+). It catalyses the reaction 20alpha-hydroxy-5beta-pregnan-3-one + NADP(+) = 5beta-pregnan-3,20-dione + NADPH + H(+). The catalysed reaction is 3beta-hydroxy-5beta-pregnane-20-one + NADP(+) = 5beta-pregnan-3,20-dione + NADPH + H(+). The enzyme catalyses 3beta-hydroxy-5beta-pregnane-20-one + NADPH + H(+) = 3beta,20alpha-dihydroxy-5beta-pregnane + NADP(+). It carries out the reaction (3beta,5alpha,17beta)-3-hydroxyandrostan-17-yl sulfate + NADP(+) = 5alpha-dihydrotestosterone sulfate + NADPH + H(+). The protein operates within steroid metabolism. With respect to regulation, inhibited by hexestrol with an IC(50) of 9.5 uM, 1,10-phenanthroline with an IC(50) of 55 uM, 1,7-phenanthroline with an IC(50) of 72 uM, flufenamic acid with an IC(50) of 6.0 uM, indomethacin with an IC(50) of 140 uM, ibuprofen with an IC(50) of 950 uM, lithocholic acid with an IC(50) of 25 uM, ursodeoxycholic acid with an IC(50) of 340 uM and chenodeoxycholic acid with an IC(50) of 570 uM. The oxidation reaction is inhibited by low micromolar concentrations of NADPH. Cytosolic aldo-keto reductase that catalyzes the NADH and NADPH-dependent reduction of ketosteroids to hydroxysteroids. Most probably acts as a reductase in vivo since the oxidase activity measured in vitro is inhibited by physiological concentrations of NADPH. Displays a broad positional specificity acting on positions 3, 17 and 20 of steroids and regulates the metabolism of hormones like estrogens and androgens. May also reduce conjugated steroids such as 5alpha-dihydrotestosterone sulfate. Displays affinity for bile acids. The protein is Aldo-keto reductase family 1 member C1 (AKR1C1) of Homo sapiens (Human).